We begin with the raw amino-acid sequence, 109 residues long: Nucleoid-associated protein Caul_4574 (109 aa).

Belongs to the YbaB/EbfC family. Homodimer.

The protein resides in the cytoplasm. It is found in the nucleoid. Binds to DNA and alters its conformation. May be involved in regulation of gene expression, nucleoid organization and DNA protection. The protein is Nucleoid-associated protein Caul_4574 of Caulobacter sp. (strain K31).